Reading from the N-terminus, the 599-residue chain is Aspartate--tRNA(Asp/Asn) ligase (599 aa).

Glu180 lines the L-aspartate pocket. The aspartate stretch occupies residues 204 to 207; that stretch reads QLLK. Arg226 contacts L-aspartate. ATP-binding positions include 226–228 and Gln235; that span reads RDE. His457 provides a ligand contact to L-aspartate. Glu491 is an ATP binding site. Arg498 contacts L-aspartate. ATP is bound at residue 543–546; that stretch reads GWDR. Positions 565 to 599 are disordered; it reads KAGGGRDPLTGAPAPISDEQRAETGVDYDPDADEN. Over residues 590 to 599 the composition is skewed to acidic residues; sequence VDYDPDADEN.

This sequence belongs to the class-II aminoacyl-tRNA synthetase family. Type 1 subfamily. Homodimer.

It localises to the cytoplasm. It carries out the reaction tRNA(Asx) + L-aspartate + ATP = L-aspartyl-tRNA(Asx) + AMP + diphosphate. In terms of biological role, aspartyl-tRNA synthetase with relaxed tRNA specificity since it is able to aspartylate not only its cognate tRNA(Asp) but also tRNA(Asn). Reaction proceeds in two steps: L-aspartate is first activated by ATP to form Asp-AMP and then transferred to the acceptor end of tRNA(Asp/Asn). The chain is Aspartate--tRNA(Asp/Asn) ligase from Bifidobacterium longum (strain NCC 2705).